The sequence spans 465 residues: Argininosuccinate lyase (465 aa).

The protein belongs to the lyase 1 family. Argininosuccinate lyase subfamily.

It localises to the cytoplasm. It carries out the reaction 2-(N(omega)-L-arginino)succinate = fumarate + L-arginine. It functions in the pathway amino-acid biosynthesis; L-arginine biosynthesis; L-arginine from L-ornithine and carbamoyl phosphate: step 3/3. This Bradyrhizobium diazoefficiens (strain JCM 10833 / BCRC 13528 / IAM 13628 / NBRC 14792 / USDA 110) protein is Argininosuccinate lyase.